The sequence spans 155 residues: Small ribosomal subunit protein uS7 (155 aa).

This sequence belongs to the universal ribosomal protein uS7 family. Part of the 30S ribosomal subunit. Contacts proteins S9 and S11.

In terms of biological role, one of the primary rRNA binding proteins, it binds directly to 16S rRNA where it nucleates assembly of the head domain of the 30S subunit. Is located at the subunit interface close to the decoding center, probably blocks exit of the E-site tRNA. The protein is Small ribosomal subunit protein uS7 of Xanthomonas oryzae pv. oryzae (strain MAFF 311018).